Consider the following 202-residue polypeptide: Guanylyl cyclase-activating protein 1 (202 aa).

Gly2 carries N-myristoyl glycine lipidation. Position 3 is a deamidated asparagine (Asn3). 4 EF-hand domains span residues 31-49 (SGQL…KNLS), 51-86 (SASQ…VLKG), 87-122 (KVEQ…IRTI), and 131-166 (SAEE…DQML). Residues Asp64, Asn66, Asp68, Tyr70, Glu75, Asp100, Asp102, Asn104, Cys106, Glu111, Asp144, Asn146, Asp148, Glu150, and Glu155 each contribute to the Ca(2+) site.

As to quaternary structure, homodimer. As to expression, in the retina, expressed in rod photoreceptors (at protein level). Expressed in cone photoreceptors.

It is found in the membrane. The protein localises to the photoreceptor inner segment. The protein resides in the cell projection. It localises to the cilium. Its subcellular location is the photoreceptor outer segment. Functionally, stimulates retinal guanylyl cyclase when free calcium ions concentration is low and inhibits guanylyl cyclase when free calcium ions concentration is elevated. This Ca(2+)-sensitive regulation of retinal guanylyl cyclase is a key event in recovery of the dark state of rod photoreceptors following light exposure. May be involved in cone photoreceptor light response and recovery of response in bright light. This Mus musculus (Mouse) protein is Guanylyl cyclase-activating protein 1 (Guca1a).